The primary structure comprises 295 residues: Probable intramembrane protease C25B8.17 (295 aa).

The helical transmembrane segment at 1-21 (MEGVILASSALFTVYIGAKWS) threads the bilayer. The Cytoplasmic portion of the chain corresponds to 22 to 35 (AQEEEPEEKQLINK). A helical membrane pass occupies residues 36 to 56 (RLAVLFPIFGGVTLVLMYLAL). Residues 57–63 (RYLSKEY) are Lumenal-facing. Residues 64 to 84 (IQLILQGYASLASIICFVRSF) traverse the membrane as a helical segment. Residues 85 to 89 (NPKTT) are Cytoplasmic-facing. A helical membrane pass occupies residues 90-106 (FGKITATMSSIAIALFY). At 107–111 (FKTKH) the chain is on the lumenal side. Residues 112 to 130 (WMASNILAWALAANSISIM) traverse the membrane as a helical segment. At 131 to 139 (RIDSYNTGA) the chain is on the cytoplasmic side. A helical transmembrane segment spans residues 140–160 (LLLGALFFYDIYFVFGTEVMV). The active site involves D149. Residues 161 to 183 (TVATGIDIPAKYVLPQFKNPTRL) lie on the Lumenal side of the membrane. Residues 184-204 (SMLGLGDIVMPGLMLALMYRF) traverse the membrane as a helical segment. D190 is a catalytic residue. At 205-221 (DLHYYINSTSQPKKHST) the chain is on the cytoplasmic side. Residues 222–244 (YFRNTFIAYGLGLGVTNFALYYF) traverse the membrane as a helical segment. The Lumenal segment spans residues 245–249 (KAAQP). Residues 249 to 251 (PAL) carry the PAL motif. Residues 250–268 (ALLYLSPACIVAPLLTAWY) traverse the membrane as a helical segment. Over 269-295 (RDELKTLFSFRSETEDETDEQDKCKST) the chain is Cytoplasmic.

The protein belongs to the peptidase A22B family.

It localises to the endoplasmic reticulum membrane. It is found in the golgi apparatus membrane. This chain is Probable intramembrane protease C25B8.17, found in Schizosaccharomyces pombe (strain 972 / ATCC 24843) (Fission yeast).